The following is a 407-amino-acid chain: Magnesium-protoporphyrin IX monomethyl ester [oxidative] cyclase 1, chloroplastic (407 aa).

Over residues 1–10 (MQTTLKQQRA) the composition is skewed to polar residues. The tract at residues 1 to 28 (MQTTLKQQRASGRVSARQPFRSAAVARP) is disordered.

Belongs to the AcsF family. It depends on Fe cation as a cofactor.

Its subcellular location is the plastid. The protein localises to the chloroplast thylakoid membrane. It carries out the reaction Mg-protoporphyrin IX 13-monomethyl ester + 3 NADPH + 3 O2 + 2 H(+) = 3,8-divinyl protochlorophyllide a + 3 NADP(+) + 5 H2O. The protein operates within porphyrin-containing compound metabolism; chlorophyll biosynthesis. Its function is as follows. Catalyzes the formation of the isocyclic ring in chlorophyll biosynthesis under oxygen- and copper-deficient conditions. Mediates the cyclase reaction, which results in the formation of divinylprotochlorophyllide (Pchlide) characteristic of all chlorophylls from magnesium-protoporphyrin IX 13-monomethyl ester (MgPMME). The protein is Magnesium-protoporphyrin IX monomethyl ester [oxidative] cyclase 1, chloroplastic (CRD1) of Chlamydomonas reinhardtii (Chlamydomonas smithii).